The sequence spans 227 residues: UPF0441 protein YPO0661/y3517/YP_2976 (227 aa).

The segment at 198 to 227 (GGFGESVAKQSSMQRSAATSSKTTTRSMGG) is disordered. Residues 212–227 (RSAATSSKTTTRSMGG) are compositionally biased toward low complexity.

This sequence belongs to the UPF0441 family.

This Yersinia pestis protein is UPF0441 protein YPO0661/y3517/YP_2976.